The primary structure comprises 300 residues: Free fatty acid receptor 1 (300 aa).

The Extracellular portion of the chain corresponds to 1–8 (MALSPQLF). A helical membrane pass occupies residues 9–31 (FALYVSAFALGFPLNLLAIRGAV). The Cytoplasmic segment spans residues 32–41 (ARARLRLTPN). The helical transmembrane segment at 42–64 (LVYTLHLACSDLLLAITLPVKAV) threads the bilayer. Residues 65–79 (EALASGAWPLPLPLC) are Extracellular-facing. Cysteine 79 and cysteine 170 are oxidised to a cystine. Residues 80-101 (PVFVLVHFAPLYAGGGFLAALS) form a helical membrane-spanning segment. Topologically, residues 102-121 (AGRYLGAAFPFGYQAVRRPR) are cytoplasmic. Residues 122-142 (YSWGVCVAIWALVLCHMGLVL) traverse the membrane as a helical segment. The Extracellular portion of the chain corresponds to 143–178 (GLEAPGGWLNTTSSSLGINTPVNGSPVCLEAWDPNS). Asparagine 152 carries an N-linked (GlcNAc...) asparagine glycan. The helical transmembrane segment at 179–200 (ARPARLSFSILLFFVPLVITAF) threads the bilayer. Over 201 to 223 (CYVGCLRALAHSGLSHKRKLRAA) the chain is Cytoplasmic. Residues 224-248 (WAAGGAFLTLLLCLGPYNASNVASF) traverse the membrane as a helical segment. The Extracellular segment spans residues 249–256 (VNPDLGGS). Residues 257-279 (WRKLGLITGSWSVVLNPLVTGYL) traverse the membrane as a helical segment. Residues 280–300 (GASPGRGTVCTTRTQGGTIQK) are Cytoplasmic-facing.

It belongs to the G-protein coupled receptor 1 family.

The protein localises to the cell membrane. Its function is as follows. G-protein coupled receptor for medium and long chain saturated and unsaturated fatty acids that plays an important role in glucose homeostasis. Fatty acid binding increases glucose-stimulated insulin secretion, and may also enhance the secretion of glucagon-like peptide 1 (GLP-1). May also play a role in bone homeostasis; receptor signaling activates pathways that inhibit osteoclast differentiation. Ligand binding leads to a conformation change that triggers signaling via G-proteins that activate phospholipase C, leading to an increase of the intracellular calcium concentration. Seems to act through a G(q) and G(i)-mediated pathway. Mediates the anti-inflammatory effects of omega-3 polyunsaturated fatty acids (PUFAs) via inhibition of NLRP3 inflammasome activation. This is Free fatty acid receptor 1 (FFAR1) from Mesocricetus auratus (Golden hamster).